Here is a 159-residue protein sequence, read N- to C-terminus: Protein-export protein SecB (159 aa).

This sequence belongs to the SecB family. As to quaternary structure, homotetramer, a dimer of dimers. One homotetramer interacts with 1 SecA dimer.

The protein localises to the cytoplasm. Its function is as follows. One of the proteins required for the normal export of preproteins out of the cell cytoplasm. It is a molecular chaperone that binds to a subset of precursor proteins, maintaining them in a translocation-competent state. It also specifically binds to its receptor SecA. The protein is Protein-export protein SecB of Shewanella amazonensis (strain ATCC BAA-1098 / SB2B).